A 576-amino-acid polypeptide reads, in one-letter code: Probable DNA ligase (576 aa).

Position 235 (glutamate 235) interacts with ATP. The N6-AMP-lysine intermediate role is filled by lysine 237. Residues arginine 242, arginine 257, glutamate 285, phenylalanine 324, arginine 422, and lysine 428 each coordinate ATP.

The protein belongs to the ATP-dependent DNA ligase family. Requires Mg(2+) as cofactor.

It carries out the reaction ATP + (deoxyribonucleotide)n-3'-hydroxyl + 5'-phospho-(deoxyribonucleotide)m = (deoxyribonucleotide)n+m + AMP + diphosphate.. DNA ligase that seals nicks in double-stranded DNA during DNA replication, DNA recombination and DNA repair. The sequence is that of Probable DNA ligase from Koribacter versatilis (strain Ellin345).